Consider the following 212-residue polypeptide: MAIGLVGRKVGMTRIFTEDGTSIPVTVIEATPNRVTQLRTEESDGYRALQVTAGTKKANRINKAEAGHFAKAGVEAGRTLVEFRLEENEGADIEVGSEITVEIFNDTKKIDVTGTSKGKGFQGAIKRWNFSSQRMTHGNSLSHRAPGSIGQNQSPGKVFKGKKMAGQLGNKQVTTQSLEVVRVDVENGLILVKGAVPGATGNDVIVKPAVKA.

The interval 135–161 is disordered; it reads MTHGNSLSHRAPGSIGQNQSPGKVFKG. At Q153 the chain carries N5-methylglutamine.

It belongs to the universal ribosomal protein uL3 family. In terms of assembly, part of the 50S ribosomal subunit. Forms a cluster with proteins L14 and L19. Post-translationally, methylated by PrmB.

Its function is as follows. One of the primary rRNA binding proteins, it binds directly near the 3'-end of the 23S rRNA, where it nucleates assembly of the 50S subunit. The sequence is that of Large ribosomal subunit protein uL3 from Alteromonas mediterranea (strain DSM 17117 / CIP 110805 / LMG 28347 / Deep ecotype).